The chain runs to 817 residues: Protein kintoun (817 aa).

4 disordered regions span residues 233–259 (AEST…PRCS), 385–404 (AGAR…RKSC), 410–445 (AGTA…TPEN), and 473–503 (VQTS…KPLC). Residues 386-401 (GAREESADSSGADHGR) show a composition bias toward basic and acidic residues. 2 positions are modified to phosphoserine: S622 and S631. Residues 653-692 (ECSDPDGLQGKEKGVKEECPLSEKENTEHSTTSTADSNSS) are disordered. Over residues 661–680 (QGKEKGVKEECPLSEKENTE) the composition is skewed to basic and acidic residues. Residues 681–692 (HSTTSTADSNSS) are compositionally biased toward polar residues.

Belongs to the PIH1 family. Kintoun subfamily. Interacts with CFAP300. Interacts with DNAI2 and HSPA1A. Interacts with DNAAF4. Interacts with DNAAF6/PIH1D3.

The protein resides in the cytoplasm. Its subcellular location is the dynein axonemal particle. In terms of biological role, required for cytoplasmic pre-assembly of axonemal dyneins, thereby playing a central role in motility in cilia and flagella. Involved in pre-assembly of dynein arm complexes in the cytoplasm before intraflagellar transport loads them for the ciliary compartment. The polypeptide is Protein kintoun (Rattus norvegicus (Rat)).